The sequence spans 667 residues: Mannosyl-oligosaccharide alpha-1,2-mannosidase IA (667 aa).

Over 1-18 (MYRISPIGRKSNFHSREK) the chain is Cytoplasmic. A helical; Signal-anchor for type II membrane protein transmembrane segment spans residues 19–39 (CLIGLVLVTLCFLCFGGIFLL). Residues 40 to 667 (PDNFGSDRVL…PVTLPVSNAS (628 aa)) are Lumenal-facing. The disordered stretch occupies residues 154–192 (GDNAASQASSHPQSSAQQHNQQQPQLPLGGGGNDQAPDT). A compositionally biased stretch (low complexity) spans 156–178 (NAASQASSHPQSSAQQHNQQQPQ). N278 is a glycosylation site (N-linked (GlcNAc...) asparagine). An intrachain disulfide couples C483 to C515. The active-site Proton donor is the E529. Residue T640 participates in Ca(2+) binding.

Belongs to the glycosyl hydrolase 47 family. Requires Ca(2+) as cofactor. Mg(2+) serves as cofactor. Complex spatial distribution during embryogenesis, including expression in lobula plate giant neurons. Also expressed in adult wing and eyes.

The protein resides in the golgi apparatus membrane. The catalysed reaction is N(4)-(alpha-D-Man-(1-&gt;2)-alpha-D-Man-(1-&gt;2)-alpha-D-Man-(1-&gt;3)-[alpha-D-Man-(1-&gt;2)-alpha-D-Man-(1-&gt;3)-[alpha-D-Man-(1-&gt;2)-alpha-D-Man-(1-&gt;6)]-alpha-D-Man-(1-&gt;6)]-beta-D-Man-(1-&gt;4)-beta-D-GlcNAc-(1-&gt;4)-beta-D-GlcNAc)-L-asparaginyl-[protein] (N-glucan mannose isomer 9A1,2,3B1,2,3) + 4 H2O = N(4)-(alpha-D-Man-(1-&gt;3)-[alpha-D-Man-(1-&gt;3)-[alpha-D-Man-(1-&gt;6)]-alpha-D-Man-(1-&gt;6)]-beta-D-Man-(1-&gt;4)-beta-D-GlcNAc-(1-&gt;4)-beta-D-GlcNAc)-L-asparaginyl-[protein] (N-glucan mannose isomer 5A1,2) + 4 beta-D-mannose. It catalyses the reaction N(4)-(alpha-D-Man-(1-&gt;2)-alpha-D-Man-(1-&gt;2)-alpha-D-Man-(1-&gt;3)-[alpha-D-Man-(1-&gt;3)-[alpha-D-Man-(1-&gt;2)-alpha-D-Man-(1-&gt;6)]-alpha-D-Man-(1-&gt;6)]-beta-D-Man-(1-&gt;4)-beta-D-GlcNAc-(1-&gt;4)-beta-D-GlcNAc)-L-asparaginyl-[protein] (N-glucan mannose isomer 8A1,2,3B1,3) + 3 H2O = N(4)-(alpha-D-Man-(1-&gt;3)-[alpha-D-Man-(1-&gt;3)-[alpha-D-Man-(1-&gt;6)]-alpha-D-Man-(1-&gt;6)]-beta-D-Man-(1-&gt;4)-beta-D-GlcNAc-(1-&gt;4)-beta-D-GlcNAc)-L-asparaginyl-[protein] (N-glucan mannose isomer 5A1,2) + 3 beta-D-mannose. The protein operates within protein modification; protein glycosylation. Involved in the maturation of Asn-linked oligosaccharides. Progressively trim alpha-1,2-linked mannose residues from Man(9)GlcNAc(2) to produce Man(5)GlcNAc(2). This Drosophila melanogaster (Fruit fly) protein is Mannosyl-oligosaccharide alpha-1,2-mannosidase IA.